Reading from the N-terminus, the 315-residue chain is DNA-directed RNA polymerase subunit alpha (315 aa).

Residues 1-228 (MIEIEKPKVD…EHLNLFIDLT (228 aa)) form an alpha N-terminal domain (alpha-NTD) region. The tract at residues 245-315 (KEKVLEMTIE…LGLGLKPSEE (71 aa)) is alpha C-terminal domain (alpha-CTD).

This sequence belongs to the RNA polymerase alpha chain family. As to quaternary structure, homodimer. The RNAP catalytic core consists of 2 alpha, 1 beta, 1 beta' and 1 omega subunit. When a sigma factor is associated with the core the holoenzyme is formed, which can initiate transcription.

It catalyses the reaction RNA(n) + a ribonucleoside 5'-triphosphate = RNA(n+1) + diphosphate. In terms of biological role, DNA-dependent RNA polymerase catalyzes the transcription of DNA into RNA using the four ribonucleoside triphosphates as substrates. In Clostridioides difficile (strain 630) (Peptoclostridium difficile), this protein is DNA-directed RNA polymerase subunit alpha.